The following is a 350-amino-acid chain: Xylene/toluene monooxygenase electron transfer component XylA (350 aa).

The 2Fe-2S ferredoxin-type domain occupies 16-108; sequence PESTVSVRGQ…DLEIELDTVL (93 aa). Residues cysteine 52, cysteine 57, cysteine 60, and cysteine 92 each contribute to the [2Fe-2S] cluster site. Residues 109–350 form a ferredoxin--NADH reductase region; it reads GQALVPIETS…ADRFYNRPPC (242 aa). The FAD-binding FR-type domain maps to 114-213; that stretch reads PIETSALISK…RAPYGQFGLH (100 aa).

The protein belongs to the bacterial ring-hydroxylating dioxygenase ferredoxin reductase family. Monomer. The xylene/toluene monooxygenase is composed of two subunits: the electron transfer component XylA and the hydroxylase component XylM. FAD serves as cofactor. It depends on [2Fe-2S] cluster as a cofactor.

It is found in the cell inner membrane. The catalysed reaction is 2 reduced [2Fe-2S]-[ferredoxin] + NAD(+) + H(+) = 2 oxidized [2Fe-2S]-[ferredoxin] + NADH. The reductase activity is completely inhibited by quercetin (a common inhibitor of mammalian oxidoreductases) and p-chloromercuribenzoate, but not by iodoacetimide, N-ethylmaleimide and pyrrazole. Component of a monooxygenase that catalyzes the first step in the degradation of xylenes and toluenes. XylA is responsible for the transport of electrons from the electron donor NADH to the terminal hydroxylase component, XylM. The polypeptide is Xylene/toluene monooxygenase electron transfer component XylA (Pseudomonas putida (Arthrobacter siderocapsulatus)).